Here is a 128-residue protein sequence, read N- to C-terminus: Protein Wnt-8 (128 aa).

The O-palmitoleoyl serine moiety is linked to residue Ser1. Cystine bridges form between Cys71–Cys109 and Cys87–Cys102. Residues Asn74 and Asn93 are each glycosylated (N-linked (GlcNAc...) asparagine).

It belongs to the Wnt family. In terms of processing, palmitoleoylation is required for efficient binding to frizzled receptors. Depalmitoleoylation leads to Wnt signaling pathway inhibition. Post-translationally, proteolytic processing by tiki1 and tiki2 promotes oxidation and formation of large disulfide-bond oligomers, leading to inactivation of wnt8.

It localises to the secreted. The protein localises to the extracellular space. The protein resides in the extracellular matrix. Ligand for members of the frizzled family of seven transmembrane receptors. Probable developmental protein. May be a signaling molecule which affects the development of discrete regions of tissues. Is likely to signal over only few cell diameters. This Thunnus thynnus (Atlantic bluefin tuna) protein is Protein Wnt-8 (wnt8).